The primary structure comprises 437 residues: Serine carboxypeptidase-like 17 (437 aa).

The N-terminal stretch at 1-26 (MGKECYYLSWILKFHLLLVLIQLVDS) is a signal peptide. Cystine bridges form between Cys-85–Cys-327, Cys-249–Cys-263, and Cys-287–Cys-293. Residue Asn-106 is glycosylated (N-linked (GlcNAc...) asparagine). Residue Ser-181 is part of the active site. Asp-362 is an active-site residue. N-linked (GlcNAc...) asparagine glycosylation occurs at Asn-378. His-415 is an active-site residue.

Belongs to the peptidase S10 family. As to expression, expressed in seedlings and siliques.

The protein localises to the secreted. In terms of biological role, probable carboxypeptidase. In Arabidopsis thaliana (Mouse-ear cress), this protein is Serine carboxypeptidase-like 17 (SCPL17).